Reading from the N-terminus, the 165-residue chain is Type 3 secretion system regulator YopR (165 aa).

It belongs to the YopR family.

It is found in the secreted. May be involved in the regulation of the assembly of the type III secretion system (T3SS), also called injectisome, which is used to inject bacterial effector proteins into eukaryotic host cells. May control the secretion and/or polymerization of YscF/SctF, the principal component of the needle filament, thereby impacting the assembly of the T3SS. Involved in pathogenesis. The chain is Type 3 secretion system regulator YopR from Yersinia pestis.